Reading from the N-terminus, the 347-residue chain is 3-isopropylmalate dehydrogenase (347 aa).

Substrate contacts are provided by arginine 94, arginine 104, arginine 128, and aspartate 219. Positions 219, 243, and 247 each coordinate Mg(2+). 279-291 (GSAPDIAGQGKAD) is a binding site for NAD(+).

This sequence belongs to the isocitrate and isopropylmalate dehydrogenases family. LeuB type 2 subfamily. As to quaternary structure, homodimer. Mg(2+) serves as cofactor. Requires Mn(2+) as cofactor.

It localises to the cytoplasm. It carries out the reaction (2R,3S)-3-isopropylmalate + NAD(+) = 4-methyl-2-oxopentanoate + CO2 + NADH. Its pathway is amino-acid biosynthesis; L-leucine biosynthesis; L-leucine from 3-methyl-2-oxobutanoate: step 3/4. In terms of biological role, catalyzes the oxidation of 3-carboxy-2-hydroxy-4-methylpentanoate (3-isopropylmalate) to 3-carboxy-4-methyl-2-oxopentanoate. The product decarboxylates to 4-methyl-2 oxopentanoate. The chain is 3-isopropylmalate dehydrogenase from Streptomyces avermitilis (strain ATCC 31267 / DSM 46492 / JCM 5070 / NBRC 14893 / NCIMB 12804 / NRRL 8165 / MA-4680).